The following is a 267-amino-acid chain: Formamidopyrimidine-DNA glycosylase (267 aa).

Pro2 (schiff-base intermediate with DNA) is an active-site residue. Glu3 serves as the catalytic Proton donor. The active-site Proton donor; for beta-elimination activity is Lys58. 3 residues coordinate DNA: His91, Arg110, and Arg152. The segment at 233–267 (DVYGRGTDACTRCGGALEEIRLGNRSTVFCPRCQT) adopts an FPG-type zinc-finger fold. Arg257 functions as the Proton donor; for delta-elimination activity in the catalytic mechanism.

It belongs to the FPG family. Monomer. The cofactor is Zn(2+).

It carries out the reaction Hydrolysis of DNA containing ring-opened 7-methylguanine residues, releasing 2,6-diamino-4-hydroxy-5-(N-methyl)formamidopyrimidine.. The catalysed reaction is 2'-deoxyribonucleotide-(2'-deoxyribose 5'-phosphate)-2'-deoxyribonucleotide-DNA = a 3'-end 2'-deoxyribonucleotide-(2,3-dehydro-2,3-deoxyribose 5'-phosphate)-DNA + a 5'-end 5'-phospho-2'-deoxyribonucleoside-DNA + H(+). Its function is as follows. Involved in base excision repair of DNA damaged by oxidation or by mutagenic agents. Acts as a DNA glycosylase that recognizes and removes damaged bases. Has a preference for oxidized purines, such as 7,8-dihydro-8-oxoguanine (8-oxoG). Has AP (apurinic/apyrimidinic) lyase activity and introduces nicks in the DNA strand. Cleaves the DNA backbone by beta-delta elimination to generate a single-strand break at the site of the removed base with both 3'- and 5'-phosphates. In Geobacter metallireducens (strain ATCC 53774 / DSM 7210 / GS-15), this protein is Formamidopyrimidine-DNA glycosylase.